An 886-amino-acid chain; its full sequence is Adhesion G protein-coupled receptor E1 (886 aa).

A signal peptide spans 1–20 (MRGFNLLLFWGCCVMHSWEG). Residues 21–599 (HIRPTRKPNT…IMASGELTMD (579 aa)) lie on the Extracellular side of the membrane. The EGF-like 1 domain occupies 31–79 (KGNNCRDSTLCPAYATCTNTVDSYYCACKQGFLSSNGQNHFKDPGVRCK). Intrachain disulfides connect cysteine 35–cysteine 47, cysteine 41–cysteine 56, cysteine 58–cysteine 78, cysteine 84–cysteine 97, cysteine 91–cysteine 106, cysteine 108–cysteine 130, cysteine 136–cysteine 148, cysteine 142–cysteine 157, cysteine 159–cysteine 170, cysteine 176–cysteine 188, cysteine 182–cysteine 197, cysteine 199–cysteine 219, cysteine 225–cysteine 235, cysteine 229–cysteine 244, cysteine 246–cysteine 266, cysteine 272–cysteine 285, cysteine 279–cysteine 294, and cysteine 296–cysteine 315. The region spanning 80-131 (DIDECSQSPQPCGPNSSCKNLSGRYKCSCLDGFSSPTGNDWVPGKPGNFSCT) is the EGF-like 2; calcium-binding domain. N-linked (GlcNAc...) asparagine glycosylation is found at asparagine 94, asparagine 99, and asparagine 127. The 40-residue stretch at 132–171 (DINECLTSSVCPEHSDCVNSMGSYSCSCQVGFISRNSTCE) folds into the EGF-like 3; calcium-binding domain. An N-linked (GlcNAc...) asparagine glycan is attached at asparagine 167. Residues 172–220 (DVDECADPRACPEHATCNNTVGNYSCFCNPGFESSSGHLSFQGLKASCE) enclose the EGF-like 4; calcium-binding domain. 2 N-linked (GlcNAc...) asparagine glycosylation sites follow: asparagine 189 and asparagine 194. Residues 221–267 (DIDECTEMCPINSTCTNTPGSYFCTCHPGFAPSNGQLNFTDQGVECR) enclose the EGF-like 5; calcium-binding domain. 2 N-linked (GlcNAc...) asparagine glycosylation sites follow: asparagine 232 and asparagine 258. An EGF-like 6; calcium-binding domain is found at 268–316 (DIDECRQDPSTCGPNSICTNALGSYSCGCIAGFHPNPEGSQKDGNFSCQ). N-linked (GlcNAc...) asparagine glycosylation is found at asparagine 312, asparagine 366, asparagine 375, and asparagine 448. In terms of domain architecture, GAIN-B spans 431 to 597 (EYLDIESKVI…AVIMASGELT (167 aa)). Disulfide bonds link cysteine 550–cysteine 579 and cysteine 567–cysteine 581. The tract at residues 550–597 (CVSWSTDVKGGRWTSFGCVILEASETYTICSCNQMANLAVIMASGELT) is GPS. Residues 600–627 (FSLYIISHVGIIISLVCLVLAIATFLLC) traverse the membrane as a helical segment. Topologically, residues 628–634 (RSIRNHN) are cytoplasmic. Residues 635-656 (TYLHLHLCVCLLLAKTLFLAGI) traverse the membrane as a helical segment. The Extracellular segment spans residues 657–666 (HKTDNKMGCA). Residues 667-690 (IIAGFLHYLFLACFFWMLVEAVIL) form a helical membrane-spanning segment. The Cytoplasmic segment spans residues 691–709 (FLMVRNLKVVNYFSSRNIK). The chain crosses the membrane as a helical span at residues 710–731 (MLHICAFGYGLPMLVVVISASV). At 732–747 (QPQGYGMHNRCWLNTE) the chain is on the extracellular side. Residues 748 to 776 (TGFIWSFLGPVCTVIVINSLLLTWTLWIL) form a helical membrane-spanning segment. Topologically, residues 777–794 (RQRLSSVNAEVSTLKDTR) are cytoplasmic. Residues 795 to 814 (LLTFKAFAQLFILGCSWVLG) form a helical membrane-spanning segment. The Extracellular portion of the chain corresponds to 815–829 (IFQIGPVAGVMAYLF). The helical transmembrane segment at 830-852 (TIINSLQGAFIFLIHCLLNGQVR) threads the bilayer. Over 853–886 (EEYKRWITGKTKPSSQSQTSRILLSSMPSASKTG) the chain is Cytoplasmic. Positions 862 to 886 (KTKPSSQSQTSRILLSSMPSASKTG) are disordered. Over residues 863–886 (TKPSSQSQTSRILLSSMPSASKTG) the composition is skewed to polar residues.

Belongs to the G-protein coupled receptor 2 family. Adhesion G-protein coupled receptor (ADGR) subfamily. As to expression, expression is restricted to eosinophils.

It localises to the cell membrane. Functionally, orphan receptor involved in cell adhesion and probably in cell-cell interactions specifically involving cells of the immune system. May play a role in regulatory T-cells (Treg) development. The polypeptide is Adhesion G protein-coupled receptor E1 (Homo sapiens (Human)).